The following is a 128-amino-acid chain: Small ribosomal subunit protein bS6 (128 aa).

The interval 97-128 (TTPSPMMKEEKSRSLTAAPATDEAKPAEAESA) is disordered. A compositionally biased stretch (basic and acidic residues) spans 118–128 (DEAKPAEAESA).

The protein belongs to the bacterial ribosomal protein bS6 family.

Functionally, binds together with bS18 to 16S ribosomal RNA. This chain is Small ribosomal subunit protein bS6, found in Aromatoleum aromaticum (strain DSM 19018 / LMG 30748 / EbN1) (Azoarcus sp. (strain EbN1)).